The primary structure comprises 362 residues: 2-aminoethylphosphonate--pyruvate transaminase (362 aa).

Residue lysine 193 is modified to N6-(pyridoxal phosphate)lysine.

The protein belongs to the class-V pyridoxal-phosphate-dependent aminotransferase family. PhnW subfamily. Homodimer. Requires pyridoxal 5'-phosphate as cofactor.

It carries out the reaction (2-aminoethyl)phosphonate + pyruvate = phosphonoacetaldehyde + L-alanine. Its function is as follows. Involved in phosphonate degradation. This is 2-aminoethylphosphonate--pyruvate transaminase from Phocaeicola vulgatus (strain ATCC 8482 / DSM 1447 / JCM 5826 / CCUG 4940 / NBRC 14291 / NCTC 11154) (Bacteroides vulgatus).